Here is a 358-residue protein sequence, read N- to C-terminus: uncharacterized protein (358 aa).

Positions 1 to 47 (MGNVAGETRANVIPLHTNRSRVAARRRAGQRAESRQHPSLLSDPNDR) are disordered. The span at 18 to 29 (NRSRVAARRRAG) shows a compositional bias: basic residues.

To M.leprae ML2427.

This is an uncharacterized protein from Mycobacterium tuberculosis (strain CDC 1551 / Oshkosh).